Reading from the N-terminus, the 258-residue chain is Alpha- and beta-fibrinogenase stejnefibrase-1 (258 aa).

The N-terminal stretch at 1–18 (MELIRVLANLLILQLSYA) is a signal peptide. Residues 19–24 (QKSSEL) constitute a propeptide that is removed on maturation. Positions 25-249 (IIGGDECNID…HLDWIQNIIA (225 aa)) constitute a Peptidase S1 domain. 6 cysteine pairs are disulfide-bonded: cysteine 31–cysteine 163, cysteine 50–cysteine 66, cysteine 98–cysteine 256, cysteine 142–cysteine 210, cysteine 174–cysteine 189, and cysteine 200–cysteine 225. The active-site Charge relay system is histidine 65. A glycan (N-linked (GlcNAc...) asparagine) is linked at asparagine 103. The active-site Charge relay system is aspartate 110. N-linked (GlcNAc...) asparagine glycosylation is found at asparagine 121, asparagine 122, asparagine 154, and asparagine 170. Catalysis depends on serine 204, which acts as the Charge relay system.

Belongs to the peptidase S1 family. Snake venom subfamily. Monomer. In terms of tissue distribution, expressed by the venom gland.

The protein resides in the secreted. Its activity is inhibited by PMSF and p-nitrophenyl-p-guanidinobenzoate (NPGB). In terms of biological role, snake venom serine protease. Degrades concomitantly alpha- (FGA) and beta-chains of fibrinogen (FGB). This Trimeresurus stejnegeri (Chinese green tree viper) protein is Alpha- and beta-fibrinogenase stejnefibrase-1.